The sequence spans 151 residues: Deoxyuridine 5'-triphosphate nucleotidohydrolase (151 aa).

Substrate contacts are provided by residues 70–72, asparagine 83, 87–89, and methionine 97; these read RSG and LID.

The protein belongs to the dUTPase family. It depends on Mg(2+) as a cofactor.

The enzyme catalyses dUTP + H2O = dUMP + diphosphate + H(+). It participates in pyrimidine metabolism; dUMP biosynthesis; dUMP from dCTP (dUTP route): step 2/2. Functionally, this enzyme is involved in nucleotide metabolism: it produces dUMP, the immediate precursor of thymidine nucleotides and it decreases the intracellular concentration of dUTP so that uracil cannot be incorporated into DNA. The sequence is that of Deoxyuridine 5'-triphosphate nucleotidohydrolase from Pseudomonas entomophila (strain L48).